Consider the following 375-residue polypeptide: Probable pectin lyase B (375 aa).

The N-terminal stretch at 1–19 (MKYAAFLPTIGALVSQAIA) is a signal peptide. 2 disulfides stabilise this stretch: C82/C101 and C91/C225. N128 carries N-linked (GlcNAc...) asparagine glycosylation. The active site involves R255. The cysteines at positions 321 and 329 are disulfide-linked.

It belongs to the polysaccharide lyase 1 family.

The protein localises to the secreted. It carries out the reaction Eliminative cleavage of (1-&gt;4)-alpha-D-galacturonan methyl ester to give oligosaccharides with 4-deoxy-6-O-methyl-alpha-D-galact-4-enuronosyl groups at their non-reducing ends.. Pectinolytic enzymes consist of four classes of enzymes: pectin lyase, polygalacturonase, pectin methylesterase and rhamnogalacturonase. Among pectinolytic enzymes, pectin lyase is the most important in depolymerization of pectin, since it cleaves internal glycosidic bonds of highly methylated pectins. The protein is Probable pectin lyase B (pelB) of Aspergillus fumigatus (strain CBS 144.89 / FGSC A1163 / CEA10) (Neosartorya fumigata).